Reading from the N-terminus, the 173-residue chain is T-cell surface glycoprotein CD3 delta chain (173 aa).

The signal sequence occupies residues 1–21; that stretch reads MEHSGILASLILIAVLPQGSP. Topologically, residues 22 to 105 are extracellular; it reads FKIQVTEYED…CVELDSGTMA (84 aa). A disulfide bond links cysteine 37 and cysteine 73. Residues asparagine 38, asparagine 55, and asparagine 74 are each glycosylated (N-linked (GlcNAc...) asparagine). A helical transmembrane segment spans residues 106–126; that stretch reads GVIFIDLIATLLLALGVYCFA. Topologically, residues 127–173 are cytoplasmic; the sequence is GHETGRPSGAAEVQALLKNEQLYQPLRDREDTQYSRLGGNWPRNKKS. The 29-residue stretch at 138-166 folds into the ITAM domain; that stretch reads EVQALLKNEQLYQPLRDREDTQYSRLGGN. Phosphotyrosine is present on residues tyrosine 149 and tyrosine 160.

As to quaternary structure, the TCR-CD3 complex is composed of a CD3D/CD3E and a CD3G/CD3E heterodimers that preferentially associate with TCRalpha and TCRbeta, respectively, to form TCRalpha/CD3E/CD3G and TCRbeta/CD3G/CD3E trimers. In turn, the hexamer interacts with CD3Z homodimer to form the TCR-CD3 complex. Alternatively, TCRalpha and TCRbeta can be replaced by TCRgamma and TCRdelta. Interacts with coreceptors CD4 and CD8. In terms of processing, phosphorylated on Tyr residues after T-cell receptor triggering by LCK in association with CD4/CD8.

It localises to the membrane. In terms of biological role, part of the TCR-CD3 complex present on T-lymphocyte cell surface that plays an essential role in adaptive immune response. When antigen presenting cells (APCs) activate T-cell receptor (TCR), TCR-mediated signals are transmitted across the cell membrane by the CD3 chains CD3D, CD3E, CD3G and CD3Z. All CD3 chains contain immunoreceptor tyrosine-based activation motifs (ITAMs) in their cytoplasmic domain. Upon TCR engagement, these motifs become phosphorylated by Src family protein tyrosine kinases LCK and FYN, resulting in the activation of downstream signaling pathways. In addition of this role of signal transduction in T-cell activation, CD3D plays an essential role in thymocyte differentiation. Indeed, participates in correct intracellular TCR-CD3 complex assembly and surface expression. In absence of a functional TCR-CD3 complex, thymocytes are unable to differentiate properly. Interacts with CD4 and CD8 and thus serves to establish a functional link between the TCR and coreceptors CD4 and CD8, which is needed for activation and positive selection of CD4 or CD8 T-cells. This Mus musculus (Mouse) protein is T-cell surface glycoprotein CD3 delta chain (Cd3d).